Here is a 102-residue protein sequence, read N- to C-terminus: UPF0751 protein DSY4013 (102 aa).

It belongs to the UPF0751 family.

This is UPF0751 protein DSY4013 from Desulfitobacterium hafniense (strain Y51).